We begin with the raw amino-acid sequence, 218 residues long: ADP-sugar pyrophosphatase (218 aa).

An N-acetylmethionine modification is found at methionine 1. At serine 10 the chain carries Phosphoserine. Tryptophan 27 provides a ligand contact to substrate. Lysine 41 participates in a covalent cross-link: Glycyl lysine isopeptide (Lys-Gly) (interchain with G-Cter in SUMO2). At threonine 44 the chain carries Phosphothreonine. Substrate is bound by residues 45–46 (WE) and arginine 83. One can recognise a Nudix hydrolase domain in the interval 56-196 (KSADAVSVIP…EQHLTVDAKV (141 aa)). Alanine 95 lines the Mg(2+) pocket. The Nudix box motif lies at 96–117 (GFIEDGESPEAAALRELEEETG). Residue phenylalanine 97 coordinates substrate. 2 residues coordinate Mg(2+): glutamate 111 and glutamate 115. Aspartate 132 contributes to the substrate binding site. Glutamate 165 contributes to the Mg(2+) binding site. N6-acetyllysine occurs at positions 209 and 217.

The protein belongs to the Nudix hydrolase family. As to quaternary structure, homodimer. Interacts with PARG. It depends on Mg(2+) as a cofactor. Post-translationally, phosphorylation at Thr-44 is required for homodimer stability; dephosphorylation results in destabilization of the homodimer. Dephosphorylation at Thr-44 promotes the ATP-synthesis activity. In terms of tissue distribution, widely expressed. Most abundant in liver.

It is found in the nucleus. It carries out the reaction D-ribose 5-phosphate + ATP + H(+) = ADP-D-ribose + diphosphate. It catalyses the reaction ADP-D-ribose + H2O = D-ribose 5-phosphate + AMP + 2 H(+). The enzyme catalyses 8-oxo-dGDP + H2O = 8-oxo-dGMP + phosphate + H(+). In terms of biological role, enzyme that can either act as an ADP-sugar pyrophosphatase in absence of diphosphate or catalyze the synthesis of ATP in presence of diphosphate. In absence of diphosphate, hydrolyzes with similar activities various modified nucleoside diphosphates such as ADP-ribose, ADP-mannose, ADP-glucose, 8-oxo-GDP and 8-oxo-dGDP. Can also hydrolyze other nucleotide sugars with low activity. In presence of diphosphate, mediates the synthesis of ATP in the nucleus by catalyzing the conversion of ADP-ribose to ATP and ribose 5-phosphate. Nuclear ATP synthesis takes place when dephosphorylated at Thr-44. Nuclear ATP generation is required for extensive chromatin remodeling events that are energy-consuming. Does not play a role in U8 snoRNA decapping activity. Binds U8 snoRNA. The polypeptide is ADP-sugar pyrophosphatase (Mus musculus (Mouse)).